A 137-amino-acid polypeptide reads, in one-letter code: MSARTKARKRALDVLYVADIRGESIPATLAVEQQRAAAEPDRQASWAYAREIAEGFVEHQDEIDELIETYSVNWTLARMPAVDRAILRIGIWEILFNADVPDGVAISESVDLASSLSTDESASFVNGMLARIAAAQA.

Belongs to the NusB family.

In terms of biological role, involved in transcription antitermination. Required for transcription of ribosomal RNA (rRNA) genes. Binds specifically to the boxA antiterminator sequence of the ribosomal RNA (rrn) operons. This is Transcription antitermination protein NusB from Clavibacter sepedonicus (Clavibacter michiganensis subsp. sepedonicus).